We begin with the raw amino-acid sequence, 408 residues long: Secreted mono- and diacylglycerol lipase 2 (408 aa).

Residues M1–A24 form the signal peptide. A glycan (N-linked (GlcNAc...) asparagine) is linked at N177. S217 (nucleophile) is an active-site residue. Residues D283 and H374 contribute to the active site.

It belongs to the AB hydrolase superfamily. Lipase family. Class 3 subfamily.

The protein resides in the secreted. The catalysed reaction is a monoacylglycerol + H2O = glycerol + a fatty acid + H(+). The enzyme catalyses a diacylglycerol + H2O = a monoacylglycerol + a fatty acid + H(+). Functionally, secreted mono- and diacylglycerol lipase involved in plant virulence. Has a substrate preference for p-nitrophenyl esters with a carbon chain length of C10 (p-nitrophenyl caprate). This is Secreted mono- and diacylglycerol lipase 2 from Gibberella zeae (strain ATCC MYA-4620 / CBS 123657 / FGSC 9075 / NRRL 31084 / PH-1) (Wheat head blight fungus).